A 310-amino-acid chain; its full sequence is Glycine--tRNA ligase alpha subunit (310 aa).

Belongs to the class-II aminoacyl-tRNA synthetase family. Tetramer of two alpha and two beta subunits.

The protein resides in the cytoplasm. It catalyses the reaction tRNA(Gly) + glycine + ATP = glycyl-tRNA(Gly) + AMP + diphosphate. The sequence is that of Glycine--tRNA ligase alpha subunit from Agrobacterium fabrum (strain C58 / ATCC 33970) (Agrobacterium tumefaciens (strain C58)).